The chain runs to 446 residues: Tubulin alpha chain-like 3 (446 aa).

The MREC motif motif lies at 1–4 (MREC). Residues Q11, E78, S147, G151, T152, T186, N213, and N235 each coordinate GTP. E78 is a Mg(2+) binding site. Residue E261 is part of the active site.

It belongs to the tubulin family. Dimer of alpha and beta chains. A typical microtubule is a hollow water-filled tube with an outer diameter of 25 nm and an inner diameter of 15 nM. Alpha-beta heterodimers associate head-to-tail to form protofilaments running lengthwise along the microtubule wall with the beta-tubulin subunit facing the microtubule plus end conferring a structural polarity. Microtubules usually have 13 protofilaments but different protofilament numbers can be found in some organisms and specialized cells. Requires Mg(2+) as cofactor. Post-translationally, some glutamate residues at the C-terminus are polyglycylated, resulting in polyglycine chains on the gamma-carboxyl group. Glycylation is mainly limited to tubulin incorporated into axonemes (cilia and flagella) whereas glutamylation is prevalent in neuronal cells, centrioles, axonemes, and the mitotic spindle. Both modifications can coexist on the same protein on adjacent residues, and lowering polyglycylation levels increases polyglutamylation, and reciprocally. Cilia and flagella glycylation is required for their stability and maintenance. Flagella glycylation controls sperm motility. Some glutamate residues at the C-terminus are polyglutamylated, resulting in polyglutamate chains on the gamma-carboxyl group. Polyglutamylation plays a key role in microtubule severing by spastin (SPAST). SPAST preferentially recognizes and acts on microtubules decorated with short polyglutamate tails: severing activity by SPAST increases as the number of glutamates per tubulin rises from one to eight, but decreases beyond this glutamylation threshold. Glutamylation is also involved in cilia motility.

Its subcellular location is the cytoplasm. It is found in the cytoskeleton. The catalysed reaction is GTP + H2O = GDP + phosphate + H(+). Functionally, tubulin is the major constituent of microtubules, a cylinder consisting of laterally associated linear protofilaments composed of alpha- and beta-tubulin heterodimers. Microtubules grow by the addition of GTP-tubulin dimers to the microtubule end, where a stabilizing cap forms. Below the cap, tubulin dimers are in GDP-bound state, owing to GTPase activity of alpha-tubulin. This chain is Tubulin alpha chain-like 3 (Tubal3), found in Mus musculus (Mouse).